We begin with the raw amino-acid sequence, 95 residues long: Heteroscorpine-1 (95 aa).

A signal peptide spans 1–19; sequence MNSKLTALIFLGLVAIASC. A BetaSPN-type CS-alpha/beta domain is found at 55-95; that stretch reads EFQCVANIDTMGNCETHCQKTSGEKGFCHGTKCKCGKPLSY. 3 disulfides stabilise this stretch: Cys58–Cys82, Cys68–Cys87, and Cys72–Cys89.

This sequence belongs to the long chain scorpion toxin family. Class 3 subfamily. Post-translationally, contains 3 disulfide bonds. As to expression, expressed by the venom gland.

The protein localises to the secreted. Functionally, has antibacterial activity against B.subtilis, K.pneumoniae and P.aeruginosa. This is Heteroscorpine-1 from Heterometrus laoticus (Thai giant scorpion).